The chain runs to 370 residues: 2-Hydroxyacid oxidase 1 (370 aa).

An FMN hydroxy acid dehydrogenase domain is found at 1 to 365; that stretch reads MLPRLVCISD…DKTLVRKNPL (365 aa). Y26 contacts glyoxylate. FMN contacts are provided by residues 79–81, S108, and Q130; that span reads ATA. Y132 serves as a coordination point for glyoxylate. T158 contributes to the FMN binding site. R167 lines the glyoxylate pocket. K184 carries the post-translational modification N6-succinyllysine. 2 positions are modified to phosphoserine: S194 and S230. Residues K236 and S258 each contribute to the FMN site. Residues H260 and R263 each contribute to the glyoxylate site. H260 serves as the catalytic Proton acceptor. FMN-binding positions include 291–295 and 314–315; these read DGGVR and GR. The Microbody targeting signal signature appears at 368–370; that stretch reads SKI.

It belongs to the FMN-dependent alpha-hydroxy acid dehydrogenase family. As to quaternary structure, homotetramer. FMN is required as a cofactor. In terms of tissue distribution, liver.

The protein resides in the peroxisome matrix. The enzyme catalyses a (2S)-2-hydroxycarboxylate + O2 = a 2-oxocarboxylate + H2O2. The catalysed reaction is glycolate + O2 = glyoxylate + H2O2. It carries out the reaction glyoxylate + O2 + H2O = oxalate + H2O2 + H(+). It catalyses the reaction 2-hydroxyhexadecanoate + O2 = 2-oxohexadecanoate + H2O2. The enzyme catalyses 2-hydroxyoctanoate + O2 = 2-oxooctanoate + H2O2. It functions in the pathway amino-acid biosynthesis; glycine biosynthesis. Its function is as follows. Broad substrate specificity (S)-2-hydroxy-acid oxidase that preferentially oxidizes glycolate. The glyoxylate produced by the oxidation of glycolate can then be utilized by alanine-glyoxylate aminotransferase for the peroxisomal synthesis of glycine; this pathway appears to be an important step for the detoxification of glyoxylate which, if allowed to accumulate, may be metabolized to oxalate with formation of kidney stones. Can also catalyze the oxidation glyoxylate, and long chain hydroxyacids such as 2-hydroxyhexadecanoate and 2-hydroxyoctanoate. Active in vitro with the artificial electron acceptor 2,6-dichlorophenolindophenol (DCIP), but O2 is believed to be the physiological electron acceptor, leading to the production of H2O2. The protein is 2-Hydroxyacid oxidase 1 of Mus musculus (Mouse).